A 367-amino-acid polypeptide reads, in one-letter code: Cytochrome b (367 aa).

4 helical membrane passes run 25 to 45, 69 to 90, 105 to 125, and 170 to 190; these read FGSM…FLAI, WIMQ…YIHI, WLSG…GYVL, and FFAL…IHII. Heme b-binding residues include His75 and His89. Residues His174 and His188 each contribute to the heme b site. His193 serves as a coordination point for a ubiquinone. A run of 4 helical transmembrane segments spans residues 218 to 238, 280 to 300, 312 to 332, and 339 to 358; these read YKDV…MSFT, LGGT…PFTH, LTQA…WTAT, and FIFI…IINP.

The protein belongs to the cytochrome b family. As to quaternary structure, the cytochrome bc1 complex contains 3 respiratory subunits (MT-CYB, CYC1 and UQCRFS1), 2 core proteins (UQCRC1 and UQCRC2) and probably 6 low-molecular weight proteins. Heme b is required as a cofactor.

The protein resides in the mitochondrion inner membrane. In terms of biological role, component of the ubiquinol-cytochrome c reductase complex (complex III or cytochrome b-c1 complex) that is part of the mitochondrial respiratory chain. The b-c1 complex mediates electron transfer from ubiquinol to cytochrome c. Contributes to the generation of a proton gradient across the mitochondrial membrane that is then used for ATP synthesis. The sequence is that of Cytochrome b (MT-CYB) from Austrelaps superbus (Lowland copperhead snake).